We begin with the raw amino-acid sequence, 580 residues long: Peptide transporter PTR_B (580 aa).

Positions Met-1 to Asp-30 are enriched in basic and acidic residues. Positions Met-1 to His-45 are disordered. The helical transmembrane segment at Ile-57–Leu-78 threads the bilayer. Asn-101 carries N-linked (GlcNAc...) asparagine glycosylation. A run of 11 helical transmembrane segments spans residues Ala-107–Ala-127, Tyr-134–Thr-154, Thr-163–Ile-183, Val-219–Ala-239, Phe-249–Leu-269, Ala-326–Met-346, Ile-370–Ile-390, Ile-402–Phe-422, Ile-449–Thr-469, Ser-484–Leu-504, and Met-513–Phe-533.

The protein belongs to the major facilitator superfamily. Proton-dependent oligopeptide transporter (POT/PTR) (TC 2.A.17) family.

Its subcellular location is the cell membrane. The enzyme catalyses a dipeptide(out) + H(+)(out) = a dipeptide(in) + H(+)(in). The catalysed reaction is an L-amino acid tripeptide(out) + H(+)(out) = an L-amino acid tripeptide(in) + H(+)(in). Peptide transporter that exploits the inwardly directed proton motive force to facilitate the cellular uptake of di/tripeptides. Shows strong uptake specificity towards the dipeptides Tyr-Phe and Gly-His, when compared to PTR_A and PTR_C. The chain is Peptide transporter PTR_B from Candidozyma auris (Yeast).